The sequence spans 838 residues: MNLVKIEKKWQKIWEQNEVFKVKEILNKIKRYILPMFPYPSGKAHVGHVRNYTICDVIARFERSQGHNVLHAMGWDAFGLPAENAAMQNNTYPNSWVSSNVDVMRQQLKAIGLSYDWSREIITCSSQYYVHEQRFFLEMLKKGLVYQKESLVNWDPIDQTVLANEQVINGKGWRSGAIIEYRNLKQWFIKITNYADALLKGLDSLKGWPESVKTMQKKWIGQSTGININFQLKGIEASVKVFSTRPETLFGASFIALSYNHNLVQQYVNTTPETQKFIDKCSNVGTSNVNIDKMKIAVLTNLKVIHPLNSSIELPVILSNFVLMDYGTGALFGCPAHDERDHEIAKLLKLNIKQVITSTERNIDVLKEAYVGDGIMINSFHLNGLTTTEARQKVINELQHKNIGQQVTNYKLKDWGISRQRFWGCPIPIIHCKSCGAVPVPYEDLPVILPEHGVEFTGKGNPLDNHHSWKYVKCPKCHLDAVRETDTFDTFFESSWYFARFCNPTSDDMVDAKAAKYWLPVDQYIGGIEHAVMHLLYARFITRVMYDLKYIDIQEPFTSLITQGMVLHRTYQDKSNNWLYPNEVEVDSNGQLRCKADLQYVTVGKLEKMSKSKKNVVDLELVLKLYGADVARMFVLSDTPPEKDLEWSTEGIEGCYKFIQKLYNFALKLKNINLTDNKIDKVLLSKTHKTIKNVTQDIISCRLNKAIARLRELYNLIFKMSELTVQIKESFLILIRLFNPFIPHLSEEIWSLLSGRGEMLVELPWPKYEEKYIHEEEHITIAIQINGKLRSLYNCLIDTPEHDVQSAILKLEQVKKHIGDKEVRKCIFVPNKLINIII.

The short motif at Pro38 to His48 is the 'HIGH' region element. The 'KMSKS' region motif lies at Lys608–Ser612. Lys611 serves as a coordination point for ATP.

This sequence belongs to the class-I aminoacyl-tRNA synthetase family.

Its subcellular location is the cytoplasm. It catalyses the reaction tRNA(Leu) + L-leucine + ATP = L-leucyl-tRNA(Leu) + AMP + diphosphate. The protein is Leucine--tRNA ligase of Orientia tsutsugamushi (strain Boryong) (Rickettsia tsutsugamushi).